The sequence spans 857 residues: MLQALMGKIFGTTNDRELKRYRQIVNKINNLESKYKALSDEALKSAFNEIKESVLSGGKSLDSVLVDSFAITREASTRVLNMRHFDVQLIGGIVLHEGKIAEMKTGEGKTLVATLPIVLNAISGKGVHLVTVNDYLASRDGNEMRPLYEFLGFSVGVILENMHDPVVKREVYNADITYGTNNEFGFDYLRDNMSYSRENMVQRGHNFVIVDEVDSILIDEARTPLIISGPTNRTLRDFKDANDIALKLLKDEHFSVDEKDKTVLLTEEGITRAEELFKVENLYSPENASLSHILDQALKANYLFEKDVDYVVNNGEVVIVDEFTGRLSEGRRFSEGLHQALEAKESVEIKEETQTLADITFQNYFRMYNKLAGMTGTAQTEASEFAQIYSLDVISIPTNIPILRKDLNDLIYKTEKEKFEAVIATIKKLSATGQPVLIGTASIEKSEILHEVLKKEKIAHTVLNAKNHAQEGEIIKNAGAKGAVTIATNMAGRGVDIKVNDEVKALGGLYIVGTERHENRRIDNQLRGRSGRQGDNGTTQFYLSLEDSLLRIFGSDKIKSIMERLGVEDGEYIESKMVTRAVEKAQKKVENMHYEGRKHIVEYDDVANEQRKIVYKFRNQLLDPEFNISMKINEIRAEYVAHLFANVSIFNGGVKEDFNLEKLFKLIHEEINLELNPADFASYEYEELLEVLTQKIKSSYDEKMSVLNDSICSEIERELYLKELDSAWREHLYAMDNMKTGIRLRAYNQKDPLVEYKKESFNLFTELVEDIKFNTIKTLQIIQFRVEDPEEEARRVAEKLDIQRKMNEASIQFNHYQSEMENESKKISRNDLCPCGSGKKYKLCCGKSGPKKGVFAS.

Residues Q88, 106-110 (GEGKT), and D496 each bind ATP. The Zn(2+) site is built by C833, C835, C844, and C845.

Belongs to the SecA family. As to quaternary structure, monomer and homodimer. Part of the essential Sec protein translocation apparatus which comprises SecA, SecYEG and auxiliary proteins SecDF-YajC and YidC. It depends on Zn(2+) as a cofactor.

It localises to the cell inner membrane. Its subcellular location is the cytoplasm. It catalyses the reaction ATP + H2O + cellular proteinSide 1 = ADP + phosphate + cellular proteinSide 2.. Part of the Sec protein translocase complex. Interacts with the SecYEG preprotein conducting channel. Has a central role in coupling the hydrolysis of ATP to the transfer of proteins into and across the cell membrane, serving as an ATP-driven molecular motor driving the stepwise translocation of polypeptide chains across the membrane. The sequence is that of Protein translocase subunit SecA from Sulfurimonas denitrificans (strain ATCC 33889 / DSM 1251) (Thiomicrospira denitrificans (strain ATCC 33889 / DSM 1251)).